The following is a 322-amino-acid chain: Thymidylate synthase (322 aa).

DUMP contacts are provided by residues Arg-25 and 184-185 (RR). Cys-204 functions as the Nucleophile in the catalytic mechanism. DUMP-binding positions include 224 to 227 (RSGD), Asn-235, and 265 to 267 (HIY). A (6R)-5,10-methylene-5,6,7,8-tetrahydrofolate-binding site is contributed by Asp-227. Ala-321 is a (6R)-5,10-methylene-5,6,7,8-tetrahydrofolate binding site.

It belongs to the thymidylate synthase family. Bacterial-type ThyA subfamily. Homodimer.

It is found in the cytoplasm. It carries out the reaction dUMP + (6R)-5,10-methylene-5,6,7,8-tetrahydrofolate = 7,8-dihydrofolate + dTMP. It functions in the pathway pyrimidine metabolism; dTTP biosynthesis. Catalyzes the reductive methylation of 2'-deoxyuridine-5'-monophosphate (dUMP) to 2'-deoxythymidine-5'-monophosphate (dTMP) while utilizing 5,10-methylenetetrahydrofolate (mTHF) as the methyl donor and reductant in the reaction, yielding dihydrofolate (DHF) as a by-product. This enzymatic reaction provides an intracellular de novo source of dTMP, an essential precursor for DNA biosynthesis. This is Thymidylate synthase from Leuconostoc mesenteroides subsp. mesenteroides (strain ATCC 8293 / DSM 20343 / BCRC 11652 / CCM 1803 / JCM 6124 / NCDO 523 / NBRC 100496 / NCIMB 8023 / NCTC 12954 / NRRL B-1118 / 37Y).